We begin with the raw amino-acid sequence, 250 residues long: Probable transcriptional regulatory protein Plut_1643 (250 aa).

It belongs to the TACO1 family.

The protein localises to the cytoplasm. This is Probable transcriptional regulatory protein Plut_1643 from Chlorobium luteolum (strain DSM 273 / BCRC 81028 / 2530) (Pelodictyon luteolum).